The primary structure comprises 535 residues: Arylsulfatase G (535 aa).

A signal peptide spans 1–18 (MGWLFLKVLFLGVTFLGC). Positions 44, 45, and 84 each coordinate Ca(2+). Cys-84 (nucleophile) is an active-site residue. At Cys-84 the chain carries 3-oxoalanine (Cys). An N-linked (GlcNAc...) asparagine glycan is attached at Asn-117. Lys-137 serves as a coordination point for substrate. His-139 is a catalytic residue. Residue Ser-162 coordinates substrate. Asn-215 carries an N-linked (GlcNAc...) asparagine glycan. His-251 provides a ligand contact to substrate. Asp-302 and Asn-303 together coordinate Ca(2+). Asn-356 and Asn-497 each carry an N-linked (GlcNAc...) asparagine glycan.

This sequence belongs to the sulfatase family. Ca(2+) is required as a cofactor. Post-translationally, N-glycosylated with both high mannose and complex type sugars. In terms of processing, the conversion to 3-oxoalanine (also known as C-formylglycine, FGly), of a serine or cysteine residue in prokaryotes and of a cysteine residue in eukaryotes, is critical for catalytic activity. The 63-kDa precursor undergoes proteolytic processing in two steps, yielding two fragments in the first step (apparent molecular masses of 44 and 18 kDa). In the second step, the 44-kDa fragment is processed further to the 34- and 10-kDa chains. The 10-kDa chain is a cleavage product of the 44-kDa fragment but linked to the 18-kDa chain through a disulfide bridge.

The protein localises to the lysosome. The enzyme catalyses an aryl sulfate + H2O = a phenol + sulfate + H(+). It carries out the reaction Hydrolysis of the 3-sulfate groups of the N-sulfo-D-glucosamine 3-O-sulfate units of heparin.. Functionally, displays arylsulfatase activity with pseudosubstrates at acidic pH, such as p-nitrocatechol sulfate. Catalyzes the hydrolysis of the 3-sulfate groups of the N-sulfo-D-glucosamine 3-O-sulfate units of heparin. The protein is Arylsulfatase G (ARSG) of Canis lupus familiaris (Dog).